The following is a 504-amino-acid chain: L-carnitine/gamma-butyrobetaine antiporter (504 aa).

The next 12 helical transmembrane spans lie at 10–30 (IEPK…WLTV), 51–71 (WGWA…WLVF), 92–112 (IFMM…SIEI), 143–163 (GPLP…FFFV), 195–215 (FYLV…TPLV), 231–251 (LDAI…ACGL), 263–283 (SYLS…SFIM), 316–336 (WTVF…IFLA), 347–367 (LCFG…TVLG), 398–418 (WAAL…CFIA), 446–466 (LLVR…LLAL), and 475–495 (AIIA…LSFI).

It belongs to the BCCT transporter (TC 2.A.15) family. CaiT subfamily. As to quaternary structure, homotrimer.

Its subcellular location is the cell inner membrane. The enzyme catalyses 4-(trimethylamino)butanoate(in) + (R)-carnitine(out) = 4-(trimethylamino)butanoate(out) + (R)-carnitine(in). It functions in the pathway amine and polyamine metabolism; carnitine metabolism. Its function is as follows. Catalyzes the exchange of L-carnitine for gamma-butyrobetaine. This Escherichia coli O157:H7 protein is L-carnitine/gamma-butyrobetaine antiporter.